A 544-amino-acid chain; its full sequence is Phenylalanine--tRNA ligase beta subunit (544 aa).

The 76-residue stretch at 268–343 (LIHKIQNVRE…MSIGYNNLEP (76 aa)) folds into the B5 domain. 4 residues coordinate Mg(2+): aspartate 321, aspartate 327, glutamate 330, and aspartate 331.

It belongs to the phenylalanyl-tRNA synthetase beta subunit family. Type 2 subfamily. Tetramer of two alpha and two beta subunits. The cofactor is Mg(2+).

The protein resides in the cytoplasm. It carries out the reaction tRNA(Phe) + L-phenylalanine + ATP = L-phenylalanyl-tRNA(Phe) + AMP + diphosphate + H(+). This is Phenylalanine--tRNA ligase beta subunit from Saccharolobus solfataricus (strain ATCC 35092 / DSM 1617 / JCM 11322 / P2) (Sulfolobus solfataricus).